We begin with the raw amino-acid sequence, 602 residues long: Bifunctional lycopene cyclase/phytoene synthase (602 aa).

Positions M1 to Q241 are lycopene beta-cyclase. 7 helical membrane-spanning segments follow: residues F6 to I26, I30 to D50, F76 to F96, V118 to A138, Y146 to G166, F168 to L188, and M230 to P250. Positions A248–Q602 are phytoene synthase.

It in the N-terminal section; belongs to the lycopene beta-cyclase family. The protein in the C-terminal section; belongs to the phytoene/squalene synthase family.

The protein resides in the membrane. It catalyses the reaction all-trans-lycopene = gamma-carotene. The catalysed reaction is gamma-carotene = all-trans-beta-carotene. The enzyme catalyses 2 (2E,6E,10E)-geranylgeranyl diphosphate = 15-cis-phytoene + 2 diphosphate. Its pathway is carotenoid biosynthesis; beta-carotene biosynthesis. The protein operates within carotenoid biosynthesis; phytoene biosynthesis; all-trans-phytoene from geranylgeranyl diphosphate: step 1/1. In terms of biological role, bifunctional enzyme that catalyzes the reactions from geranylgeranyl diphosphate to phytoene (phytoene synthase) and from lycopene to beta-carotene via the intermediate gamma-carotene and from 3,4-didehydrolycopene to torulene (lycopene cyclase). Torulene is further processed to the acidic carotenoid neurosporaxanthin. The cyclase preferentially catalyzes single cyclizations at only one end of the substrate to produce monocyclic carotenoids. Neurosporaxanthin is synthesized from geranyl-geranyl pyrophosphate (GGPP) through several enzymatic activities. Phytoene synthase activity performed by the bifunctional enzyme al-2 first produces phytoene from geranyl-geranyl pyrophosphate (GGPP). The phytoene dehydrogenase al-1 then introduces 5 desaturations to lead to 3,4-didehydrolycopene via the intermediates phytofluene, zeta-carotene, neurosporene and lycopene. Al-2 cyclase activity then converts 3,4-didehydrolycopene into torulene. Al-2 can also convet lycopene into gamma-carotene which in turn is converted to beta-carotene by an additional al-2 cyclization reaction. Torulene is the substrate of the dioxidase cao-2 that breaks the molecule, removing five carbon atoms to yield beta-apo-4'-carotenal, whereas the aldehyde dehydrogenase ylo-1 mediates the last step by converting beta-apo-4'-carotenal into neurosporaxanthin. This is Bifunctional lycopene cyclase/phytoene synthase from Neurospora crassa (strain ATCC 24698 / 74-OR23-1A / CBS 708.71 / DSM 1257 / FGSC 987).